The primary structure comprises 902 residues: Protein translocase subunit SecA (902 aa).

ATP is bound by residues Gln87, 105–109 (GEGKT), and Asp512. The segment at 850–902 (RLAKQQQLSHEVTKESQMSAVDGQVASGKKVGRNEPCPCGSGKKYKHCHGKLG) is disordered. Positions 853–868 (KQQQLSHEVTKESQMS) are enriched in polar residues. Zn(2+)-binding residues include Cys886, Cys888, Cys897, and His898. Positions 892–902 (KKYKHCHGKLG) are enriched in basic residues.

This sequence belongs to the SecA family. As to quaternary structure, monomer and homodimer. Part of the essential Sec protein translocation apparatus which comprises SecA, SecYEG and auxiliary proteins SecDF-YajC and YidC. Requires Zn(2+) as cofactor.

The protein resides in the cell inner membrane. It localises to the cytoplasm. It catalyses the reaction ATP + H2O + cellular proteinSide 1 = ADP + phosphate + cellular proteinSide 2.. Functionally, part of the Sec protein translocase complex. Interacts with the SecYEG preprotein conducting channel. Has a central role in coupling the hydrolysis of ATP to the transfer of proteins into and across the cell membrane, serving both as a receptor for the preprotein-SecB complex and as an ATP-driven molecular motor driving the stepwise translocation of polypeptide chains across the membrane. This Proteus mirabilis (strain HI4320) protein is Protein translocase subunit SecA.